A 430-amino-acid chain; its full sequence is MANVVVVGAQWGDEGKGKIVDWLSEQADIVVRFQGGHNAGHTLVINGQTYKLALLPSGVLRPSKLAVIGNGVVFDPQAFLDEVKKLQGQGVAISPENLRIAENVTLILPLHRELDATRENAAKAGAIGTTQRGIGPAYEDKVGRRAIRLMDLADLDTLPTKIERLLAHHNALRRGLDQPEIDAGQILADLSAMAPHLLPYAESVWRLLDIKRREGKRILFEGAQGALLDVDHGTYPYVTSSNTVAAQAATGTGMGPGAVGYVLGICKAYTTRVGAGPFPTELTNEIGEEIGRRGKEFGVNTGRKRRCGWFDAVLVRQTVRTCGIHGLALTKLDILDGFDSVEVCVGYKLDGKEIDYLPAGEGAQARVEPIYETIEGWKEPTANARSWAELPAQAIKYVRRIEELVGCPVALLSTSPEREDTILVQNPFEA.

Residues 12-18 (GDEGKGK) and 40-42 (GHT) each bind GTP. D13 functions as the Proton acceptor in the catalytic mechanism. 2 residues coordinate Mg(2+): D13 and G40. IMP contacts are provided by residues 13-16 (DEGK), 38-41 (NAGH), T130, R144, Q224, T239, and R303. The active-site Proton donor is the H41. Position 299–305 (299–305 (VNTGRKR)) interacts with substrate. GTP-binding positions include R305, 331–333 (KLD), and 413–415 (STS).

This sequence belongs to the adenylosuccinate synthetase family. Homodimer. Mg(2+) serves as cofactor.

It localises to the cytoplasm. The catalysed reaction is IMP + L-aspartate + GTP = N(6)-(1,2-dicarboxyethyl)-AMP + GDP + phosphate + 2 H(+). It functions in the pathway purine metabolism; AMP biosynthesis via de novo pathway; AMP from IMP: step 1/2. Plays an important role in the de novo pathway of purine nucleotide biosynthesis. Catalyzes the first committed step in the biosynthesis of AMP from IMP. This chain is Adenylosuccinate synthetase, found in Rhodopseudomonas palustris (strain ATCC BAA-98 / CGA009).